Consider the following 521-residue polypeptide: MTNIHTDKILILDFGAQYTQLIARRIREIGVYCEIWAWDHDPSEIAGFGAKGIILSGGPESTTLPGAPVAPQEVFDSGLPVFGICYGMQTLAAQLGGATEAADQREFGHAEVDVIAADALFAGLTDHAGAPRLNVWMSHGDHVSQVPPGFTITATTDRIPVAAMSNEDKRWYGVQFHPEVTHTLQGQTLLRRFVVDICGCQTLWTAANIIDDQIARVREQVGDDDVILGLSGGVDSSVVAALLHKAIGDKLTCVFVDTGLLRWQEGDQVMAMFAEHMGVKVIRVNAADRYFAKLEGVSDPEAKRKIIGNLFVEIFDEESNTLANAKWLAQGTIYPDVIESAGSKTGNAHVIKSHHNVGGLPQHMKLGLVEPLRELFKDEVRRLGVELGLPRTMVYRHPFPGPGLGVRILGEVKREYAELLAKADAIFIDELRKADLYDKISQAFAVFLPVKSVGVVGDARAYEWVIALRAVETIDFMTAHWAHLPYDFLGTVSNRIINELRGVSRVVYDISGKPPATIEWE.

The Glutamine amidotransferase type-1 domain occupies 8–203; sequence KILILDFGAQ…VVDICGCQTL (196 aa). Catalysis depends on Cys85, which acts as the Nucleophile. Residues His177 and Glu179 contribute to the active site. The region spanning 204-396 is the GMPS ATP-PPase domain; it reads WTAANIIDDQ…LGLPRTMVYR (193 aa). An ATP-binding site is contributed by 231–237; that stretch reads SGGVDSS.

As to quaternary structure, homodimer.

The catalysed reaction is XMP + L-glutamine + ATP + H2O = GMP + L-glutamate + AMP + diphosphate + 2 H(+). The protein operates within purine metabolism; GMP biosynthesis; GMP from XMP (L-Gln route): step 1/1. In terms of biological role, catalyzes the synthesis of GMP from XMP. The sequence is that of GMP synthase [glutamine-hydrolyzing] from Xanthomonas oryzae pv. oryzae (strain MAFF 311018).